A 938-amino-acid polypeptide reads, in one-letter code: AP-4 complex subunit epsilon (938 aa).

HEAT repeat units follow at residues 118–153 (DLIILIVNTIQKDLRSDNYLVVCAALNAICRLINEE), 154–190 (TIPAVLPQVVELLNHQKEAVRKKAIMALHRFHRKSPS), 192–227 (VSHLVSNFRKRLCDNDPGVMGATLCPLFDLISEDVN), 234–272 (SSFVSILKQVTERRLPKSYDYHQMPAPFIQIKLLKIMAL), 321–358 (KLLEAAADAISKFLKSDSHNLKYMGIDGLGRLIKISPD), 359–395 (IAEQHQLAVIDCLEDPDDTLKRKTFELLYKMTKSSNV), 397–431 (VIVDRMIDYMISINDNHYKTEIASRCVELAEQFAP), 454–495 (KVAH…EPKL), 517–556 (YSASYISGKLCDVADAYSSDETVKGYAVSALMKIYAFEIA), and 562–601 (DVLPECQSLIEELLASHSTDLQQRAYELQALLALDARAVE). 4 disordered regions span residues 690–712 (EPSYYSESHQPISTSLVSERESS), 725–867 (WGRP…VMGL), 880–912 (VDSLLSELSDSSKGNSRTYQPQTSKGPNTKEAL), and 919–938 (RQMGVNPTSQNPTLFKDLLG). Over residues 694–706 (YSESHQPISTSLV) the composition is skewed to polar residues. Residues 728–744 (PSYQSTTAASSTTPQAA) show a composition bias toward low complexity. Positions 764–779 (SSYEPKKPEIDPEKQR) are enriched in basic and acidic residues. Residues 808-821 (ANKTATVPKENQTP) are compositionally biased toward polar residues. 2 stretches are compositionally biased toward low complexity: residues 853-863 (DSSSQDGGSSD) and 880-891 (VDSLLSELSDSS). The stretch at 874–911 (VTTTTSVDSLLSELSDSSKGNSRTYQPQTSKGPNTKEA) is one HEAT 11 repeat. Residues 892–906 (KGNSRTYQPQTSKGP) show a composition bias toward polar residues.

This sequence belongs to the adaptor complexes large subunit family. Adaptor protein complex 4 (AP-4) is a heterotetramer composed of two large adaptins (epsilon-type subunit and beta-type subunit), a medium adaptin (mu-type subunit) and a small adaptin (sigma-type subunit).

It localises to the golgi apparatus. Its subcellular location is the trans-Golgi network. It is found in the membrane. The protein resides in the coated pit. In terms of biological role, subunit of novel type of clathrin- or non-clathrin-associated protein coat involved in targeting proteins from the trans-Golgi network (TGN) to the endosomal-lysosomal system. This Arabidopsis thaliana (Mouse-ear cress) protein is AP-4 complex subunit epsilon.